The following is a 294-amino-acid chain: N-acetylmuramic acid 6-phosphate etherase (294 aa).

The region spanning 54–217 (VIKSFEEEGR…STASMIGVGK (164 aa)) is the SIS domain. Catalysis depends on glutamate 82, which acts as the Proton donor. Residue glutamate 113 is part of the active site.

The protein belongs to the GCKR-like family. MurNAc-6-P etherase subfamily. In terms of assembly, homodimer.

It catalyses the reaction N-acetyl-D-muramate 6-phosphate + H2O = N-acetyl-D-glucosamine 6-phosphate + (R)-lactate. It participates in amino-sugar metabolism; N-acetylmuramate degradation. Its function is as follows. Specifically catalyzes the cleavage of the D-lactyl ether substituent of MurNAc 6-phosphate, producing GlcNAc 6-phosphate and D-lactate. The protein is N-acetylmuramic acid 6-phosphate etherase of Bacillus cereus (strain ATCC 10987 / NRS 248).